A 651-amino-acid polypeptide reads, in one-letter code: MCAASVYPVSPEAAKHSLTDEAAYRAMYQQSVINPEGFWREQAARLDWIRPFSEVKRTSFDDHHVDIKWFADGTLNVSANCLDRHLAERGDQVAIIWEGDDPSEHREITYRELYQEVCKFANALRGQDVHRGDVVTIYMPMIPEAAVAMLACARIGAIHSVVFGGFSPEALAGRIIDGSSKVVITADQGIRGGKTIALKENVDEALTNPQTRCVQKIIVVRRTGANIRWYPHRDVSYDDLMRVAGEVCAPKEMGAEEPLFILYTSGSTGKPKGVLHTCGGYLLYAALTHERVFDYRPGDIYWCTADIGWITGHSYLIYGPLANGATTLMYEGVPNYPDVTRIARIIDKHRVNILYTAPTAIRAMMAEGPAAMEGADGSSLRLLGTVGEPINPEAWHWYYETVGRSRCPIVDTWWQTETGGILISPLPGATALKPGSATRPLFGVVPGLVDNLGNLLEGPAEGNLVILDSWPGQMRTIYGDHDRFVDTYFKTFRGMYFTGDGARRDEDGYYWITGRVDDVLNVSGHRMGTAEIESALVAHAKVAEAAAVGVPHPLKGQAIYVYVTLVAGTEPSDTLRQELQQWVRHEIGPIAVPDTIQWAPGLPKTRSGKIMRRLLRKIATDDYDTLGDTSTLADPGVVDQLIAAHEAVKQR.

CoA contacts are provided by residues 191 to 194 (RGGK), threonine 311, and asparagine 335. ATP contacts are provided by residues 387–389 (GEP), 411–416 (DTWWQT), aspartate 500, and arginine 515. Position 523 (serine 523) interacts with CoA. Arginine 526 contributes to the ATP binding site. Mg(2+) is bound by residues valine 537, histidine 539, and valine 542. A CoA-binding site is contributed by arginine 584. Lysine 609 carries the N6-acetyllysine modification.

The protein belongs to the ATP-dependent AMP-binding enzyme family. Requires Mg(2+) as cofactor. In terms of processing, acetylated. Deacetylation by the SIR2-homolog deacetylase activates the enzyme.

It catalyses the reaction acetate + ATP + CoA = acetyl-CoA + AMP + diphosphate. In terms of biological role, catalyzes the conversion of acetate into acetyl-CoA (AcCoA), an essential intermediate at the junction of anabolic and catabolic pathways. AcsA undergoes a two-step reaction. In the first half reaction, AcsA combines acetate with ATP to form acetyl-adenylate (AcAMP) intermediate. In the second half reaction, it can then transfer the acetyl group from AcAMP to the sulfhydryl group of CoA, forming the product AcCoA. This Stutzerimonas stutzeri (strain A1501) (Pseudomonas stutzeri) protein is Acetyl-coenzyme A synthetase.